A 248-amino-acid chain; its full sequence is 2,3-bisphosphoglycerate-dependent phosphoglycerate mutase (248 aa).

Substrate-binding positions include 8–15, 21–22, arginine 60, 87–90, lysine 98, 114–115, and 183–184; these read RHGESEWN, TG, ERHY, RR, and GN. Histidine 9 serves as the catalytic Tele-phosphohistidine intermediate. The active-site Proton donor/acceptor is the glutamate 87.

The protein belongs to the phosphoglycerate mutase family. BPG-dependent PGAM subfamily.

It carries out the reaction (2R)-2-phosphoglycerate = (2R)-3-phosphoglycerate. It functions in the pathway carbohydrate degradation; glycolysis; pyruvate from D-glyceraldehyde 3-phosphate: step 3/5. Its function is as follows. Catalyzes the interconversion of 2-phosphoglycerate and 3-phosphoglycerate. This chain is 2,3-bisphosphoglycerate-dependent phosphoglycerate mutase, found in Borrelia turicatae (strain 91E135).